Here is a 161-residue protein sequence, read N- to C-terminus: Cyclic pyranopterin monophosphate synthase (161 aa).

Substrate contacts are provided by residues 75–77 (LCH) and 113–114 (ME). D128 is an active-site residue.

Belongs to the MoaC family. As to quaternary structure, homohexamer; trimer of dimers.

The catalysed reaction is (8S)-3',8-cyclo-7,8-dihydroguanosine 5'-triphosphate = cyclic pyranopterin phosphate + diphosphate. It functions in the pathway cofactor biosynthesis; molybdopterin biosynthesis. Its function is as follows. Catalyzes the conversion of (8S)-3',8-cyclo-7,8-dihydroguanosine 5'-triphosphate to cyclic pyranopterin monophosphate (cPMP). In Thioalkalivibrio sulfidiphilus (strain HL-EbGR7), this protein is Cyclic pyranopterin monophosphate synthase.